Reading from the N-terminus, the 191-residue chain is UPF0312 protein Pmen_0419 (191 aa).

The N-terminal stretch at 1-22 is a signal peptide; the sequence is MLKNALAALVLGSALIGGQAMA.

Belongs to the UPF0312 family. Type 1 subfamily.

It is found in the periplasm. The chain is UPF0312 protein Pmen_0419 from Ectopseudomonas mendocina (strain ymp) (Pseudomonas mendocina).